We begin with the raw amino-acid sequence, 187 residues long: MAESHATGTTTHTEVPHGKPEFPPFNKDTFASQLVSFAIAFALLYVIVSRFALPRVGGVIKTREGTIEKDLAEAQAFRDESDLALKAYETELAAARTRAQAIGSETRDTLAAQSDAERKAVELSLSAKLAEAEKTISDMRTKAMGNVKAIAADATSAIVQQLSGTAPDAQLIDRAVDASLKGGRDAA.

Positions 1–13 are enriched in polar residues; that stretch reads MAESHATGTTTHT. Positions 1 to 21 are disordered; the sequence is MAESHATGTTTHTEVPHGKPE. The helical transmembrane segment at 31–53 threads the bilayer; that stretch reads ASQLVSFAIAFALLYVIVSRFAL.

Belongs to the ATPase B chain family. F-type ATPases have 2 components, F(1) - the catalytic core - and F(0) - the membrane proton channel. F(1) has five subunits: alpha(3), beta(3), gamma(1), delta(1), epsilon(1). F(0) has three main subunits: a(1), b(2) and c(10-14). The alpha and beta chains form an alternating ring which encloses part of the gamma chain. F(1) is attached to F(0) by a central stalk formed by the gamma and epsilon chains, while a peripheral stalk is formed by the delta and b chains.

It is found in the cell inner membrane. F(1)F(0) ATP synthase produces ATP from ADP in the presence of a proton or sodium gradient. F-type ATPases consist of two structural domains, F(1) containing the extramembraneous catalytic core and F(0) containing the membrane proton channel, linked together by a central stalk and a peripheral stalk. During catalysis, ATP synthesis in the catalytic domain of F(1) is coupled via a rotary mechanism of the central stalk subunits to proton translocation. Functionally, component of the F(0) channel, it forms part of the peripheral stalk, linking F(1) to F(0). The b'-subunit is a diverged and duplicated form of b found in plants and photosynthetic bacteria. This is ATP synthase subunit b 2 (atpF2) from Afipia carboxidovorans (strain ATCC 49405 / DSM 1227 / KCTC 32145 / OM5) (Oligotropha carboxidovorans).